Reading from the N-terminus, the 562-residue chain is Glutamine--tRNA ligase (562 aa).

The 'HIGH' region motif lies at 35–45 (PEPNGYLHIGH). Residues 36–38 (EPN) and 42–48 (HIGHAKS) contribute to the ATP site. D68 and Y213 together coordinate L-glutamine. ATP-binding positions include T232, 262 to 263 (RL), and 270 to 272 (LSK). The 'KMSKS' region motif lies at 269–273 (ILSKR).

The protein belongs to the class-I aminoacyl-tRNA synthetase family. As to quaternary structure, monomer.

The protein resides in the cytoplasm. The enzyme catalyses tRNA(Gln) + L-glutamine + ATP = L-glutaminyl-tRNA(Gln) + AMP + diphosphate. In Buchnera aphidicola subsp. Schizaphis graminum (strain Sg), this protein is Glutamine--tRNA ligase.